A 216-amino-acid polypeptide reads, in one-letter code: MILVGIAVLILLAVFAILYYKQKEKFVVVGKFVEPIPSNPGQDFTLLPMDQTYTFADPVPDTATAFDVVLSRFTDKKAPADLLKGATFPEAAPYTDSEVENISKLALSRVKGPDAPVLSFISVEYAAKGVDNKKNTHYDIAFMVYDQVKNFSLKLVLVAVLDAKNKLWIKKFSSFNSFTPKDKGPKGVENIDETPLAEFIPDFVQFSRLYKDNANV.

The tract at residues M1–K21 is hydrophobic.

Interacts with the major capsid protein.

Its subcellular location is the virion. In terms of biological role, one of the minor capsid proteins that constitute a network internal to the major capsid proteins and outside the lipid membrane. The minor capsid proteins glue and stabilize the capsomers. The chain is Minor capsid protein P6 from Paramecium bursaria Chlorella virus 1 (PBCV-1).